The sequence spans 303 residues: Methionyl-tRNA formyltransferase (303 aa).

110–113 (SLLP) contributes to the (6S)-5,6,7,8-tetrahydrofolate binding site.

Belongs to the Fmt family.

It carries out the reaction L-methionyl-tRNA(fMet) + (6R)-10-formyltetrahydrofolate = N-formyl-L-methionyl-tRNA(fMet) + (6S)-5,6,7,8-tetrahydrofolate + H(+). Its function is as follows. Attaches a formyl group to the free amino group of methionyl-tRNA(fMet). The formyl group appears to play a dual role in the initiator identity of N-formylmethionyl-tRNA by promoting its recognition by IF2 and preventing the misappropriation of this tRNA by the elongation apparatus. This chain is Methionyl-tRNA formyltransferase, found in Ehrlichia ruminantium (strain Welgevonden).